A 462-amino-acid chain; its full sequence is Glycogen synthase 1 (462 aa).

ADP-alpha-D-glucose is bound at residue arginine 6.

Belongs to the glycosyltransferase 1 family. Bacterial/plant glycogen synthase subfamily.

The enzyme catalyses [(1-&gt;4)-alpha-D-glucosyl](n) + ADP-alpha-D-glucose = [(1-&gt;4)-alpha-D-glucosyl](n+1) + ADP + H(+). It functions in the pathway glycan biosynthesis; glycogen biosynthesis. Synthesizes alpha-1,4-glucan chains using ADP-glucose. This chain is Glycogen synthase 1, found in Bradyrhizobium diazoefficiens (strain JCM 10833 / BCRC 13528 / IAM 13628 / NBRC 14792 / USDA 110).